The primary structure comprises 260 residues: Adenosylcobinamide-GDP ribazoletransferase (260 aa).

The next 6 membrane-spanning stretches (helical) occupy residues 43–63 (LVGT…QFIF), 64–84 (PASV…GGFH), 117–137 (GSLA…ELAL), 143–163 (VAGG…SIIF), 197–217 (VICL…TLFV), and 237–257 (TLGA…LLLW).

Belongs to the CobS family. Mg(2+) is required as a cofactor.

Its subcellular location is the cell inner membrane. It carries out the reaction alpha-ribazole + adenosylcob(III)inamide-GDP = adenosylcob(III)alamin + GMP + H(+). It catalyses the reaction alpha-ribazole 5'-phosphate + adenosylcob(III)inamide-GDP = adenosylcob(III)alamin 5'-phosphate + GMP + H(+). It participates in cofactor biosynthesis; adenosylcobalamin biosynthesis; adenosylcobalamin from cob(II)yrinate a,c-diamide: step 7/7. In terms of biological role, joins adenosylcobinamide-GDP and alpha-ribazole to generate adenosylcobalamin (Ado-cobalamin). Also synthesizes adenosylcobalamin 5'-phosphate from adenosylcobinamide-GDP and alpha-ribazole 5'-phosphate. In Shewanella amazonensis (strain ATCC BAA-1098 / SB2B), this protein is Adenosylcobinamide-GDP ribazoletransferase.